The chain runs to 156 residues: Small ribosomal subunit protein uS7 (156 aa).

Belongs to the universal ribosomal protein uS7 family. As to quaternary structure, part of the 30S ribosomal subunit. Contacts proteins S9 and S11.

Functionally, one of the primary rRNA binding proteins, it binds directly to 16S rRNA where it nucleates assembly of the head domain of the 30S subunit. Is located at the subunit interface close to the decoding center, probably blocks exit of the E-site tRNA. The protein is Small ribosomal subunit protein uS7 of Clostridium kluyveri (strain NBRC 12016).